Consider the following 541-residue polypeptide: Probable malate:quinone oxidoreductase (541 aa).

The disordered stretch occupies residues 520 to 541 (AKPAAGAAQQAKPAKATADIAL).

The protein belongs to the MQO family. Requires FAD as cofactor.

It carries out the reaction (S)-malate + a quinone = a quinol + oxaloacetate. It participates in carbohydrate metabolism; tricarboxylic acid cycle; oxaloacetate from (S)-malate (quinone route): step 1/1. This Ralstonia nicotianae (strain ATCC BAA-1114 / GMI1000) (Ralstonia solanacearum) protein is Probable malate:quinone oxidoreductase.